Reading from the N-terminus, the 169-residue chain is MSRAAVAIALLGCVVAAYGAPAEGHDDAKAEWTGKSWMGKWESTDRIENFDAFISALGLPLEQYGGNHKTFHKIWKEGDHYHHQISVPDKNYKNDVNFKLNEEGTTQHNNTEIKYKYTEDGGNLKAEVHVPSRNKVIHDEYKVNGDELEKTYKVGDVTAKRWYKKSSSS.

An N-terminal signal peptide occupies residues 1 to 19 (MSRAAVAIALLGCVVAAYG). Positions 31–60 (EWTGKSWMGKWESTDRIENFDAFISALGLP) are SAHS-c1. The tract at residues 75–103 (WKEGDHYHHQISVPDKNYKNDVNFKLNEE) is SAHS-c2. N-linked (GlcNAc...) asparagine glycosylation is present at asparagine 109. An SAHS-c3 region spans residues 116 to 165 (KYTEDGGNLKAEVHVPSRNKVIHDEYKVNGDELEKTYKVGDVTAKRWYKK).

Belongs to the Secretory-abundant heat soluble protein (SAHS) family.

The protein localises to the secreted. In terms of biological role, secreted heat soluble protein acting as a molecular shield in water-deficient condition. Tardigrade-specific intrinsically disordered proteins (TDPs) are essential for desiccation tolerance by forming non-crystalline amorphous solids upon desiccation, and this vitrified state mirrors their protective capabilities. The protein is Secretory-abundant heat soluble protein 1 of Ramazzottius varieornatus (Water bear).